Consider the following 268-residue polypeptide: Tryptophan synthase alpha chain (268 aa).

Catalysis depends on proton acceptor residues E49 and D60.

The protein belongs to the TrpA family. As to quaternary structure, tetramer of two alpha and two beta chains.

It catalyses the reaction (1S,2R)-1-C-(indol-3-yl)glycerol 3-phosphate + L-serine = D-glyceraldehyde 3-phosphate + L-tryptophan + H2O. Its pathway is amino-acid biosynthesis; L-tryptophan biosynthesis; L-tryptophan from chorismate: step 5/5. The alpha subunit is responsible for the aldol cleavage of indoleglycerol phosphate to indole and glyceraldehyde 3-phosphate. The chain is Tryptophan synthase alpha chain from Shigella sonnei (strain Ss046).